Here is a 106-residue protein sequence, read N- to C-terminus: Iron-sulfur cluster assembly protein CyaY (106 aa).

It belongs to the frataxin family.

Its function is as follows. Involved in iron-sulfur (Fe-S) cluster assembly. May act as a regulator of Fe-S biogenesis. The chain is Iron-sulfur cluster assembly protein CyaY from Pectobacterium carotovorum subsp. carotovorum (strain PC1).